The chain runs to 287 residues: Bifunctional protein FolD (287 aa).

Residues 166-168 and I232 contribute to the NADP(+) site; that span reads GAS.

Belongs to the tetrahydrofolate dehydrogenase/cyclohydrolase family. In terms of assembly, homodimer.

The catalysed reaction is (6R)-5,10-methylene-5,6,7,8-tetrahydrofolate + NADP(+) = (6R)-5,10-methenyltetrahydrofolate + NADPH. It carries out the reaction (6R)-5,10-methenyltetrahydrofolate + H2O = (6R)-10-formyltetrahydrofolate + H(+). It participates in one-carbon metabolism; tetrahydrofolate interconversion. In terms of biological role, catalyzes the oxidation of 5,10-methylenetetrahydrofolate to 5,10-methenyltetrahydrofolate and then the hydrolysis of 5,10-methenyltetrahydrofolate to 10-formyltetrahydrofolate. This is Bifunctional protein FolD from Aeromonas salmonicida (strain A449).